The primary structure comprises 342 residues: N-acetyl-gamma-glutamyl-phosphate reductase (342 aa).

Cys149 is a catalytic residue.

Belongs to the NAGSA dehydrogenase family. Type 1 subfamily.

Its subcellular location is the cytoplasm. It catalyses the reaction N-acetyl-L-glutamate 5-semialdehyde + phosphate + NADP(+) = N-acetyl-L-glutamyl 5-phosphate + NADPH + H(+). It participates in amino-acid biosynthesis; L-arginine biosynthesis; N(2)-acetyl-L-ornithine from L-glutamate: step 3/4. Its function is as follows. Catalyzes the NADPH-dependent reduction of N-acetyl-5-glutamyl phosphate to yield N-acetyl-L-glutamate 5-semialdehyde. The polypeptide is N-acetyl-gamma-glutamyl-phosphate reductase (Laribacter hongkongensis (strain HLHK9)).